The primary structure comprises 888 residues: Alanine--tRNA ligase (888 aa).

Zn(2+)-binding residues include His571, His575, Cys674, and His678.

Belongs to the class-II aminoacyl-tRNA synthetase family. Zn(2+) is required as a cofactor.

It is found in the cytoplasm. It carries out the reaction tRNA(Ala) + L-alanine + ATP = L-alanyl-tRNA(Ala) + AMP + diphosphate. Its function is as follows. Catalyzes the attachment of alanine to tRNA(Ala) in a two-step reaction: alanine is first activated by ATP to form Ala-AMP and then transferred to the acceptor end of tRNA(Ala). Also edits incorrectly charged Ser-tRNA(Ala) and Gly-tRNA(Ala) via its editing domain. This is Alanine--tRNA ligase from Nocardia farcinica (strain IFM 10152).